A 259-amino-acid chain; its full sequence is Probable dihydroorotate dehydrogenase B (NAD(+)), electron transfer subunit (259 aa).

An FAD-binding FR-type domain is found at 1–89; sequence MLPLNVTITQ…RGPFGKGFTL (89 aa). [2Fe-2S] cluster contacts are provided by C211, C216, C219, and C229.

The protein belongs to the PyrK family. Heterotetramer of 2 PyrK and 2 PyrD type B subunits. [2Fe-2S] cluster serves as cofactor. FAD is required as a cofactor.

It functions in the pathway pyrimidine metabolism; UMP biosynthesis via de novo pathway; orotate from (S)-dihydroorotate (NAD(+) route): step 1/1. Functionally, responsible for channeling the electrons from the oxidation of dihydroorotate from the FMN redox center in the PyrD type B subunit to the ultimate electron acceptor NAD(+). This Methanosarcina acetivorans (strain ATCC 35395 / DSM 2834 / JCM 12185 / C2A) protein is Probable dihydroorotate dehydrogenase B (NAD(+)), electron transfer subunit.